Consider the following 161-residue polypeptide: Phosphopantetheine adenylyltransferase (161 aa).

A substrate-binding site is contributed by Thr10. Residues 10–11 (TF) and His18 contribute to the ATP site. Substrate-binding residues include Lys42, Leu74, and Arg88. ATP-binding positions include 89–91 (GIR), Glu99, and 124–130 (WRYLSST).

Belongs to the bacterial CoaD family. In terms of assembly, homohexamer. Mg(2+) is required as a cofactor.

It is found in the cytoplasm. The enzyme catalyses (R)-4'-phosphopantetheine + ATP + H(+) = 3'-dephospho-CoA + diphosphate. Its pathway is cofactor biosynthesis; coenzyme A biosynthesis; CoA from (R)-pantothenate: step 4/5. Reversibly transfers an adenylyl group from ATP to 4'-phosphopantetheine, yielding dephospho-CoA (dPCoA) and pyrophosphate. In Haemophilus ducreyi (strain 35000HP / ATCC 700724), this protein is Phosphopantetheine adenylyltransferase.